Consider the following 123-residue polypeptide: Small ribosomal subunit protein uS13 (123 aa).

The interval 89–123 (GRRHRSGLPVRGQRTRTNARTRKGKRKAVAKKKAK) is disordered. Residues 101 to 123 (QRTRTNARTRKGKRKAVAKKKAK) show a composition bias toward basic residues.

It belongs to the universal ribosomal protein uS13 family. In terms of assembly, part of the 30S ribosomal subunit. Forms a loose heterodimer with protein S19. Forms two bridges to the 50S subunit in the 70S ribosome.

Its function is as follows. Located at the top of the head of the 30S subunit, it contacts several helices of the 16S rRNA. In the 70S ribosome it contacts the 23S rRNA (bridge B1a) and protein L5 of the 50S subunit (bridge B1b), connecting the 2 subunits; these bridges are implicated in subunit movement. Contacts the tRNAs in the A and P-sites. This is Small ribosomal subunit protein uS13 from Cutibacterium acnes (strain DSM 16379 / KPA171202) (Propionibacterium acnes).